The primary structure comprises 103 residues: MSKQKIRIRLKAFDYKLIDQSAAEIVDTAKRTGAIVKGPVPLPTRMKRFDILRSPHVNKTSRDQFEIRTHQRLMDIVDPTDKTVDALMKLDLPAGVDVEIKLQ.

This sequence belongs to the universal ribosomal protein uS10 family. In terms of assembly, part of the 30S ribosomal subunit.

In terms of biological role, involved in the binding of tRNA to the ribosomes. In Acidovorax sp. (strain JS42), this protein is Small ribosomal subunit protein uS10.